A 317-amino-acid polypeptide reads, in one-letter code: Anamorsin homolog (317 aa).

An N-terminal SAM-like domain region spans residues 1–192; it reads MREVLVVSES…ITGVRPNWKA (192 aa). Residues 193 to 216 are linker; the sequence is KGDRKSSSIHAAPIDGYISKAPDY. [2Fe-2S] cluster contacts are provided by Cys-219, Cys-226, Cys-229, and Cys-231. The segment at 219 to 231 is fe-S binding site A; sequence CSTKPRACANCTC. [4Fe-4S] cluster contacts are provided by Cys-286, Cys-289, Cys-297, and Cys-300. 2 short sequence motifs (cx2C motif) span residues 286–289 and 297–300; these read CGNC and CDSC. Positions 286–300 are fe-S binding site B; it reads CGNCYLGDAFRCDSC.

Belongs to the anamorsin family. In terms of assembly, monomer. Requires [2Fe-2S] cluster as cofactor. [4Fe-4S] cluster serves as cofactor.

It is found in the cytoplasm. The protein resides in the mitochondrion intermembrane space. In terms of biological role, component of the cytosolic iron-sulfur (Fe-S) protein assembly (CIA) machinery. Required for the maturation of extramitochondrial Fe-S proteins. Part of an electron transfer chain functioning in an early step of cytosolic Fe-S biogenesis, facilitating the de novo assembly of a [4Fe-4S] cluster on the cytosolic Fe-S scaffold complex. Electrons are transferred from NADPH via a FAD- and FMN-containing diflavin oxidoreductase. Together with the diflavin oxidoreductase, also required for the assembly of the diferric tyrosyl radical cofactor of ribonucleotide reductase (RNR), probably by providing electrons for reduction during radical cofactor maturation in the catalytic small subunit. This is Anamorsin homolog from Theileria parva (East coast fever infection agent).